Consider the following 352-residue polypeptide: Protein NDRG4 (352 aa).

Phosphoserine occurs at positions 298, 317, and 323. The segment covering 314 to 323 (RTASLTSASS) has biased composition (low complexity). The tract at residues 314 to 352 (RTASLTSASSVDGSRPQACTHSESSEGLGQVNHTMEVSC) is disordered. The segment covering 330–352 (QACTHSESSEGLGQVNHTMEVSC) has biased composition (polar residues).

This sequence belongs to the NDRG family. Phosphorylated in an aortic smooth muscle cell line, following PDGF treatment. Expressed predominantly in brain and heart (at protein level). In the brain, detected in astrocytes. Isoform 1 and isoform 2 are only expressed in brain. Isoform 3 is expressed in both heart and brain. Up-regulated in glioblastoma multiforme cells.

Its subcellular location is the cytoplasm. It localises to the cytosol. Functionally, contributes to the maintenance of intracerebral BDNF levels within the normal range, which is necessary for the preservation of spatial learning and the resistance to neuronal cell death caused by ischemic stress. May enhance growth factor-induced ERK1 and ERK2 phosphorylation, including that induced by PDGF and FGF. May attenuate NGF-promoted ELK1 phosphorylation in a microtubule-dependent manner. This Homo sapiens (Human) protein is Protein NDRG4 (NDRG4).